The chain runs to 196 residues: Peptidyl-tRNA hydrolase (196 aa).

Position 18 (Tyr-18) interacts with tRNA. His-23 acts as the Proton acceptor in catalysis. Residues Phe-69, Asn-71, and Asn-117 each contribute to the tRNA site.

The protein belongs to the PTH family. As to quaternary structure, monomer.

It localises to the cytoplasm. The catalysed reaction is an N-acyl-L-alpha-aminoacyl-tRNA + H2O = an N-acyl-L-amino acid + a tRNA + H(+). Its function is as follows. Hydrolyzes ribosome-free peptidyl-tRNAs (with 1 or more amino acids incorporated), which drop off the ribosome during protein synthesis, or as a result of ribosome stalling. Functionally, catalyzes the release of premature peptidyl moieties from peptidyl-tRNA molecules trapped in stalled 50S ribosomal subunits, and thus maintains levels of free tRNAs and 50S ribosomes. The sequence is that of Peptidyl-tRNA hydrolase from Vibrio vulnificus (strain CMCP6).